A 24-amino-acid chain; its full sequence is Brevinin-1SY (24 aa).

Cys18 and Cys24 form a disulfide bridge.

Expressed by the skin glands.

It localises to the secreted. Functionally, antibacterial activity against Gram-positive bacterium S.aureus and Gram-negative bacterium E.coli. The sequence is that of Brevinin-1SY from Lithobates sylvaticus (Wood frog).